A 334-amino-acid chain; its full sequence is MKAIVVPGPKQGYKLEEVPDPKPGKDEVIIRVDRAALCYRDLLQLQGYYPRMKYPVILGHEVVGTIEEVGENIKGFEVGDKVISLLYAPDGTCEYCQIGEEAYCHHRLGYSEELDGFFAEKAKIKVTSLVKVPKGTPDEGAVLVPCVTGMIYRGIRRAGGIRKGELVLVTGASGGVGIHAIQVAKALGAKVIGVTTSEEKAKIIKQYADYVIVGTKFSEEAKKIGDVTLVIDTVGTPTFDESLKSLWMGGRIVQIGNVDPSQIYNLRLGYIILKDLKIVGHASATKKDAEDTLKLTQEGKIKPVIAGTVSLENIDEGYKMIKDKNKVGKVLVKP.

Zn(2+) is bound at residue Cys-38. Tyr-39 contributes to the NADP(+) binding site. Residues His-60, Asp-90, Cys-93, Cys-96, Cys-104, and Cys-146 each coordinate Zn(2+). Residues 173–176 and 195–197 contribute to the NADP(+) site; these read SGGV and TTS.

It belongs to the zinc-containing alcohol dehydrogenase family. As to quaternary structure, monomer. The cofactor is Zn(2+).

The enzyme catalyses propanoyl-CoA + NADP(+) = acryloyl-CoA + NADPH + H(+). Plays a role in autotrophic carbon fixation via the 3-hydroxypropionate/4-hydroxybutyrate cycle. Catalyzes the acryloyl-CoA dependent NADPH oxidation and formation of propionyl-CoA. Inactive towards 3-hydroxypropionyl-CoA, NADH and crotonyl-CoA. This Sulfurisphaera tokodaii (strain DSM 16993 / JCM 10545 / NBRC 100140 / 7) (Sulfolobus tokodaii) protein is Acryloyl-coenzyme A reductase.